Consider the following 372-residue polypeptide: N-methyl-L-tryptophan oxidase (372 aa).

4–34 provides a ligand contact to FAD; the sequence is DLIIIGSGSVGAAAGYYATRAGLKVLMTDAH. Cys-307 is subject to S-8alpha-FAD cysteine.

This sequence belongs to the MSOX/MTOX family. MTOX subfamily. In terms of assembly, monomer. FAD is required as a cofactor.

It catalyses the reaction N(alpha)-methyl-L-tryptophan + O2 + H2O = L-tryptophan + formaldehyde + H2O2. Catalyzes the oxidative demethylation of N-methyl-L-tryptophan. The polypeptide is N-methyl-L-tryptophan oxidase (Salmonella agona (strain SL483)).